Reading from the N-terminus, the 338-residue chain is Acetoin:2,6-dichlorophenolindophenol oxidoreductase subunit beta (338 aa).

As to quaternary structure, tetramer of 2 alpha and 2 beta subunits.

It functions in the pathway ketone degradation; acetoin degradation. In terms of biological role, catalyzes the 2,6-dichlorophenolindophenol-dependent cleavage of acetoin into acetate and acetaldehyde, in vitro. The beta subunit is probably not the catalytic subunit of the enzyme. This chain is Acetoin:2,6-dichlorophenolindophenol oxidoreductase subunit beta (acoB), found in Cupriavidus necator (strain ATCC 17699 / DSM 428 / KCTC 22496 / NCIMB 10442 / H16 / Stanier 337) (Ralstonia eutropha).